The primary structure comprises 371 residues: Histidinol-phosphate aminotransferase (371 aa).

Lys228 is subject to N6-(pyridoxal phosphate)lysine.

It belongs to the class-II pyridoxal-phosphate-dependent aminotransferase family. Histidinol-phosphate aminotransferase subfamily. Pyridoxal 5'-phosphate is required as a cofactor.

It carries out the reaction L-histidinol phosphate + 2-oxoglutarate = 3-(imidazol-4-yl)-2-oxopropyl phosphate + L-glutamate. It participates in amino-acid biosynthesis; L-histidine biosynthesis; L-histidine from 5-phospho-alpha-D-ribose 1-diphosphate: step 7/9. In Methanococcus maripaludis (strain C5 / ATCC BAA-1333), this protein is Histidinol-phosphate aminotransferase.